A 681-amino-acid chain; its full sequence is Conserved oligomeric Golgi complex subunit 2 (681 aa).

The protein belongs to the COG2 family. In terms of assembly, component of the conserved oligomeric Golgi complex which is composed of eight different subunits and is required for normal Golgi morphology and localization.

It localises to the golgi apparatus membrane. In terms of biological role, required for normal Golgi morphology and function. This chain is Conserved oligomeric Golgi complex subunit 2 (cogc-2), found in Caenorhabditis elegans.